A 432-amino-acid chain; its full sequence is Adenylosuccinate synthetase (432 aa).

Residues 13–19 (GDEGKGK) and 41–43 (GHT) each bind GTP. The Proton acceptor role is filled by aspartate 14. The Mg(2+) site is built by aspartate 14 and glycine 41. Residues 14-17 (DEGK), 39-42 (NAGH), threonine 130, arginine 144, glutamine 225, threonine 240, and arginine 304 each bind IMP. The active-site Proton donor is histidine 42. A substrate-binding site is contributed by 300-306 (AVTGRPR). Residues arginine 306, 332–334 (KLD), and 415–417 (STG) contribute to the GTP site.

It belongs to the adenylosuccinate synthetase family. As to quaternary structure, homodimer. The cofactor is Mg(2+).

It localises to the cytoplasm. It carries out the reaction IMP + L-aspartate + GTP = N(6)-(1,2-dicarboxyethyl)-AMP + GDP + phosphate + 2 H(+). It participates in purine metabolism; AMP biosynthesis via de novo pathway; AMP from IMP: step 1/2. Functionally, plays an important role in the de novo pathway of purine nucleotide biosynthesis. Catalyzes the first committed step in the biosynthesis of AMP from IMP. The protein is Adenylosuccinate synthetase of Haemophilus influenzae (strain 86-028NP).